A 176-amino-acid chain; its full sequence is Ribosome maturation factor RimM (176 aa).

Residues 101 to 170 (EGEYFESDLI…RITVELPEGL (70 aa)) enclose the PRC barrel domain.

This sequence belongs to the RimM family. As to quaternary structure, binds ribosomal protein uS19.

Its subcellular location is the cytoplasm. Functionally, an accessory protein needed during the final step in the assembly of 30S ribosomal subunit, possibly for assembly of the head region. Essential for efficient processing of 16S rRNA. May be needed both before and after RbfA during the maturation of 16S rRNA. It has affinity for free ribosomal 30S subunits but not for 70S ribosomes. The chain is Ribosome maturation factor RimM from Solibacter usitatus (strain Ellin6076).